Consider the following 183-residue polypeptide: Ribosomal RNA small subunit methyltransferase G (183 aa).

S-adenosyl-L-methionine-binding positions include glycine 60, phenylalanine 65, 111-112 (IE), and arginine 125.

Belongs to the methyltransferase superfamily. RNA methyltransferase RsmG family.

The protein localises to the cytoplasm. It carries out the reaction guanosine(527) in 16S rRNA + S-adenosyl-L-methionine = N(7)-methylguanosine(527) in 16S rRNA + S-adenosyl-L-homocysteine. Its function is as follows. Specifically methylates the N7 position of guanine in position 527 of 16S rRNA. The protein is Ribosomal RNA small subunit methyltransferase G of Campylobacter hominis (strain ATCC BAA-381 / DSM 21671 / CCUG 45161 / LMG 19568 / NCTC 13146 / CH001A).